The following is a 687-amino-acid chain: Ferric vulnibactin receptor VuuA (687 aa).

A signal peptide spans Met1–Ala37. The TBDR plug domain maps to Thr63–Asn185. Residues His190–Phe687 enclose the TBDR beta-barrel domain. The short motif at Glu670–Phe687 is the TonB C-terminal box element.

The protein belongs to the TonB-dependent receptor family.

The protein localises to the cell outer membrane. Its function is as follows. Involved in the uptake of iron in complex with vulnibactin, a catecholate siderophore synthesized by V.vulnificus. Binds and transports ferric vulnibactin across the outer membrane. The energy source is provided by the inner membrane TonB system. The sequence is that of Ferric vulnibactin receptor VuuA from Vibrio vulnificus.